A 355-amino-acid chain; its full sequence is UDP-N-acetylglucosamine--N-acetylmuramyl-(pentapeptide) pyrophosphoryl-undecaprenol N-acetylglucosamine transferase (355 aa).

UDP-N-acetyl-alpha-D-glucosamine-binding positions include 15–17 (TGG), asparagine 127, arginine 163, serine 191, isoleucine 244, 263–268 (ALTVSE), and glutamine 288.

This sequence belongs to the glycosyltransferase 28 family. MurG subfamily.

The protein localises to the cell inner membrane. The catalysed reaction is di-trans,octa-cis-undecaprenyl diphospho-N-acetyl-alpha-D-muramoyl-L-alanyl-D-glutamyl-meso-2,6-diaminopimeloyl-D-alanyl-D-alanine + UDP-N-acetyl-alpha-D-glucosamine = di-trans,octa-cis-undecaprenyl diphospho-[N-acetyl-alpha-D-glucosaminyl-(1-&gt;4)]-N-acetyl-alpha-D-muramoyl-L-alanyl-D-glutamyl-meso-2,6-diaminopimeloyl-D-alanyl-D-alanine + UDP + H(+). It functions in the pathway cell wall biogenesis; peptidoglycan biosynthesis. Cell wall formation. Catalyzes the transfer of a GlcNAc subunit on undecaprenyl-pyrophosphoryl-MurNAc-pentapeptide (lipid intermediate I) to form undecaprenyl-pyrophosphoryl-MurNAc-(pentapeptide)GlcNAc (lipid intermediate II). The chain is UDP-N-acetylglucosamine--N-acetylmuramyl-(pentapeptide) pyrophosphoryl-undecaprenol N-acetylglucosamine transferase from Salmonella paratyphi B (strain ATCC BAA-1250 / SPB7).